A 338-amino-acid polypeptide reads, in one-letter code: Isopentenyl-diphosphate delta-isomerase (338 aa).

Position 13 to 14 (13 to 14 (RK)) interacts with substrate. FMN contacts are provided by residues 72–74 (AMT), S102, and N130. Position 102–104 (102–104 (SQR)) interacts with substrate. Position 165 (Q165) interacts with substrate. Residue E166 coordinates Mg(2+). Residues K197, T227, 274 to 276 (GIR), and 295 to 296 (AR) each bind FMN.

The protein belongs to the IPP isomerase type 2 family. Homooctamer. Dimer of tetramers. Requires FMN as cofactor. It depends on NADPH as a cofactor. Mg(2+) is required as a cofactor.

It is found in the cytoplasm. The enzyme catalyses isopentenyl diphosphate = dimethylallyl diphosphate. Involved in the biosynthesis of isoprenoids. Catalyzes the 1,3-allylic rearrangement of the homoallylic substrate isopentenyl (IPP) to its allylic isomer, dimethylallyl diphosphate (DMAPP). In Deinococcus radiodurans (strain ATCC 13939 / DSM 20539 / JCM 16871 / CCUG 27074 / LMG 4051 / NBRC 15346 / NCIMB 9279 / VKM B-1422 / R1), this protein is Isopentenyl-diphosphate delta-isomerase.